The chain runs to 61 residues: Small ribosomal subunit protein uS14 (61 aa).

C24, C27, C40, and C43 together coordinate Zn(2+).

Belongs to the universal ribosomal protein uS14 family. Zinc-binding uS14 subfamily. Part of the 30S ribosomal subunit. Contacts proteins S3 and S10. Zn(2+) serves as cofactor.

Binds 16S rRNA, required for the assembly of 30S particles and may also be responsible for determining the conformation of the 16S rRNA at the A site. The chain is Small ribosomal subunit protein uS14 from Borrelia hermsii (strain HS1 / DAH).